The chain runs to 189 residues: Glycerol-3-phosphate acyltransferase (189 aa).

The next 4 helical transmembrane spans lie at 1–21 (MFWLLALLAYLLGSLSFAIVL), 77–97 (LQEQAWVGVCAVLGHLFPVYF), 111–131 (MLMGLYFPAALLAIAAWLLTF), and 151–171 (LLAWREPAALLPISVLTVMIV).

The protein belongs to the PlsY family. Probably interacts with PlsX.

The protein resides in the cell inner membrane. The catalysed reaction is an acyl phosphate + sn-glycerol 3-phosphate = a 1-acyl-sn-glycero-3-phosphate + phosphate. Its pathway is lipid metabolism; phospholipid metabolism. Its function is as follows. Catalyzes the transfer of an acyl group from acyl-phosphate (acyl-PO(4)) to glycerol-3-phosphate (G3P) to form lysophosphatidic acid (LPA). This enzyme utilizes acyl-phosphate as fatty acyl donor, but not acyl-CoA or acyl-ACP. The polypeptide is Glycerol-3-phosphate acyltransferase (Pseudomonas putida (strain W619)).